The sequence spans 728 residues: MTSITPVTLANCEDEPIHVPGAIQPHGALVTLRADGMVLAASENIQALLGFVASPGSYLTQEQVGPEVLRMLEEGLTGNGPWSNSVETRIGEHLFDVIGHSYKEVFYLEFEIRTADTLSITSFTLNAQRIIAQVQLHNDTASLLSNVTDELRRMTGYDRVMAYRFRHDDSGEVVAESRREDLESYLGQRYPASDIPAQARRLYIQNPIRLIADVAYTPMRVFPALNPETNESFDLSYSVLRSVSPIHCEYLTNMGVRASMSISIVVGGKLWGLFSCHHMSPKLIPYPVRMSFQIFSQVCSAIVERLEQGRIAELLRVSTERRLALARRARDADDLFGALAHPDDGIAALIPCDGALVMLGGRTLSIRGDFERQAGNVLQRLQRDPERDIYHTDNWPQPSEDSPDGGDCCGVLAIRFHRQESGWIFWFRHEEVHRIRWGGKPEKLLTIGPSGPRLTPRGSFEAWEEVVRGHSTPWSETDLAIAEKLRLDLMELCLNHAAEVDRMRQRLIAVLGHDLRNPLQSISMAAALLSSSDTRTTELRQHISASSSRMERLVSQILDMSRLQSGIGLTVNPVDTDVSQLVRQIVCETDVAYPGLVIEIAIDPQVRAVVDPDRYAQVAANLLSNARHHGLPGRPVLVTLTRQGDEVCLSVLNETSGLSEAQLANLFEPFKRESADNQRNRNGLGIGLYISQAIAQAHQGRIDVDCRDDVITFCLRLPVRQAETGSSS.

Position 12 (C12) interacts with a tetrapyrrole. A chromophore binding domain region spans residues 17 to 495 (IHVPGAIQPH…RLDLMELCLN (479 aa)). In terms of domain architecture, GAF spans 139 to 303 (DTASLLSNVT…IFSQVCSAIV (165 aa)). The region spanning 510–721 (VLGHDLRNPL…TFCLRLPVRQ (212 aa)) is the Histidine kinase domain. H513 bears the Phosphohistidine; by autocatalysis mark.

In the N-terminal section; belongs to the phytochrome family. Contains one covalently linked tetrapyrrole chromophore.

The enzyme catalyses ATP + protein L-histidine = ADP + protein N-phospho-L-histidine.. Its function is as follows. Photoreceptor which exists in two forms that are reversibly interconvertible by light: the R form that absorbs maximally in the red region of the spectrum and the FR form that absorbs maximally in the far-red region. This chain is Bacteriophytochrome (bphP), found in Pseudomonas aeruginosa (strain ATCC 15692 / DSM 22644 / CIP 104116 / JCM 14847 / LMG 12228 / 1C / PRS 101 / PAO1).